Here is an 85-residue protein sequence, read N- to C-terminus: Protein U62 (85 aa).

It belongs to the herpesviridae UL91 family.

This is Protein U62 (U62) from Homo sapiens (Human).